The following is a 339-amino-acid chain: Glycerol-3-phosphate dehydrogenase [NAD(P)+] (339 aa).

4 residues coordinate NADPH: serine 14, tyrosine 15, histidine 35, and lysine 109. Sn-glycerol 3-phosphate is bound by residues lysine 109, glycine 138, and threonine 140. Alanine 142 is an NADPH binding site. The sn-glycerol 3-phosphate site is built by lysine 194, aspartate 247, serine 257, arginine 258, and asparagine 259. Lysine 194 functions as the Proton acceptor in the catalytic mechanism. Arginine 258 is an NADPH binding site. The NADPH site is built by valine 282 and glutamate 284.

This sequence belongs to the NAD-dependent glycerol-3-phosphate dehydrogenase family.

The protein resides in the cytoplasm. The enzyme catalyses sn-glycerol 3-phosphate + NAD(+) = dihydroxyacetone phosphate + NADH + H(+). The catalysed reaction is sn-glycerol 3-phosphate + NADP(+) = dihydroxyacetone phosphate + NADPH + H(+). The protein operates within membrane lipid metabolism; glycerophospholipid metabolism. Catalyzes the reduction of the glycolytic intermediate dihydroxyacetone phosphate (DHAP) to sn-glycerol 3-phosphate (G3P), the key precursor for phospholipid synthesis. This chain is Glycerol-3-phosphate dehydrogenase [NAD(P)+], found in Shewanella halifaxensis (strain HAW-EB4).